Reading from the N-terminus, the 249-residue chain is 15,16-dihydrobiliverdin:ferredoxin oxidoreductase (249 aa).

The protein belongs to the HY2 family.

It catalyses the reaction 15,16-dihydrobiliverdin + oxidized 2[4Fe-4S]-[ferredoxin] = biliverdin IXalpha + reduced 2[4Fe-4S]-[ferredoxin] + 2 H(+). Its function is as follows. Catalyzes the two-electron reduction of biliverdin IX-alpha at the C15 methine bridge. The chain is 15,16-dihydrobiliverdin:ferredoxin oxidoreductase from Prochlorococcus marinus (strain MIT 9303).